The primary structure comprises 509 residues: Dye-decolorizing peroxidase AauDyP1 (509 aa).

The N-terminal stretch at 1–22 is a signal peptide; it reads MRLSPVFVALLSGLLAADLGLA. Positions 23–61 are excised as a propeptide; it reads RSVAPRVADSPAAVTGTRKTSLLKNVAGLPPVPSAAQVA. Asp229 serves as the catalytic Proton acceptor. Asn343 carries an N-linked (GlcNAc...) asparagine glycan. Heme is bound at residue His365. N-linked (GlcNAc...) asparagine glycosylation is found at Asn383, Asn410, and Asn476.

This sequence belongs to the DyP-type peroxidase family. It depends on heme b as a cofactor.

It localises to the secreted. It catalyses the reaction Reactive Blue 5 + 2 H2O2 = 2,2'-disulfonyl azobenzene + 3-[(4-amino-6-chloro-1,3,5-triazin-2-yl)amino]benzenesulfonate + phthalate + 2 H2O + 2 H(+). The catalysed reaction is 2 a phenolic donor + H2O2 = 2 a phenolic radical donor + 2 H2O. With respect to regulation, inhibited by imidazole. Manganese-independent peroxidase that is able to convert a large number of compounds, but its physiological substrate is not known. In addition to classic peroxidase substrates (e.g. 2,6-dimethoxyphenol), oxidizes dyes such as Reactive Blue 5 and Reactive Black 5. This is Dye-decolorizing peroxidase AauDyP1 from Auricularia auricula-judae (Judas ear fungus).